The chain runs to 71 residues: Light-harvesting protein B-800/850 alpha chain (71 aa).

The Cytoplasmic portion of the chain corresponds to 1–15; sequence MNQGKVWRVVKPTVG. A helical membrane pass occupies residues 16 to 36; sequence VPVYLGAVAVTALILHGGLLA. Histidine 31 serves as a coordination point for a bacteriochlorophyll. At 37–50 the chain is on the periplasmic side; that stretch reads KTDWFGAYWNGGKK. A helical transmembrane segment spans residues 51–71; that stretch reads AAAAAAAVAPAPVAAPQAPAQ.

The protein belongs to the antenna complex alpha subunit family. As to quaternary structure, an alpha/beta heterodimer conjugated to 3 bacteriochlorophyll molecules. The core complex is formed by different alpha and beta chains, binding bacteriochlorophyll molecules, and arranged most probably in tetrameric structures disposed around the reaction center. The non-pigmented gamma chains may constitute additional components.

It is found in the cell membrane. Functionally, antenna complexes are light-harvesting systems, which transfer the excitation energy to the reaction centers. The chain is Light-harvesting protein B-800/850 alpha chain (pucA) from Rubrivivax gelatinosus (Rhodocyclus gelatinosus).